The chain runs to 136 residues: General odorant-binding protein 57e (136 aa).

The signal sequence occupies residues Met1–Ala20. Intrachain disulfides connect Cys28-Cys61, Cys57-Cys109, and Cys98-Cys118.

This sequence belongs to the PBP/GOBP family.

Present in the aqueous fluid surrounding olfactory sensory dendrites and are thought to aid in the capture and transport of hydrophobic odorants into and through this fluid. This Drosophila melanogaster (Fruit fly) protein is General odorant-binding protein 57e.